A 967-amino-acid chain; its full sequence is Mediator of RNA polymerase II transcription subunit 14 (967 aa).

It belongs to the Mediator complex subunit 14 family. As to quaternary structure, component of the Mediator complex.

Its subcellular location is the nucleus. In terms of biological role, component of the Mediator complex, a coactivator involved in the regulated transcription of nearly all RNA polymerase II-dependent genes. Mediator functions as a bridge to convey information from gene-specific regulatory proteins to the basal RNA polymerase II transcription machinery. Mediator is recruited to promoters by direct interactions with regulatory proteins and serves as a scaffold for the assembly of a functional preinitiation complex with RNA polymerase II and the general transcription factors. This Eremothecium gossypii (strain ATCC 10895 / CBS 109.51 / FGSC 9923 / NRRL Y-1056) (Yeast) protein is Mediator of RNA polymerase II transcription subunit 14 (RGR1).